A 141-amino-acid chain; its full sequence is MTVERTLSIIKPDAVAKNVIGQIYARFEAAGLKVVAAKMAHLSAREAQAFYAVHKDRPFFKDLVDFMISGPVMIQALEGENAVLKNRDLMGATDPKKAAPGTIRADFADSIDANAVHGSDAAETAAVEIAFFFPGMNVYSR.

ATP contacts are provided by lysine 11, phenylalanine 59, arginine 87, threonine 93, arginine 104, and asparagine 114. Catalysis depends on histidine 117, which acts as the Pros-phosphohistidine intermediate.

It belongs to the NDK family. Homotetramer. Mg(2+) is required as a cofactor.

It localises to the cytoplasm. It catalyses the reaction a 2'-deoxyribonucleoside 5'-diphosphate + ATP = a 2'-deoxyribonucleoside 5'-triphosphate + ADP. The enzyme catalyses a ribonucleoside 5'-diphosphate + ATP = a ribonucleoside 5'-triphosphate + ADP. In terms of biological role, major role in the synthesis of nucleoside triphosphates other than ATP. The ATP gamma phosphate is transferred to the NDP beta phosphate via a ping-pong mechanism, using a phosphorylated active-site intermediate. The chain is Nucleoside diphosphate kinase from Albidiferax ferrireducens (strain ATCC BAA-621 / DSM 15236 / T118) (Rhodoferax ferrireducens).